A 122-amino-acid polypeptide reads, in one-letter code: uncharacterized protein (122 aa).

Belongs to the phage O protein family.

This is an uncharacterized protein from Escherichia coli O6:H1 (strain CFT073 / ATCC 700928 / UPEC).